The primary structure comprises 255 residues: Hydroxyacylglutathione hydrolase (255 aa).

Positions 56, 58, 60, 61, 112, 129, and 167 each coordinate Zn(2+).

Belongs to the metallo-beta-lactamase superfamily. Glyoxalase II family. In terms of assembly, monomer. Zn(2+) serves as cofactor.

The catalysed reaction is an S-(2-hydroxyacyl)glutathione + H2O = a 2-hydroxy carboxylate + glutathione + H(+). It participates in secondary metabolite metabolism; methylglyoxal degradation; (R)-lactate from methylglyoxal: step 2/2. In terms of biological role, thiolesterase that catalyzes the hydrolysis of S-D-lactoyl-glutathione to form glutathione and D-lactic acid. This chain is Hydroxyacylglutathione hydrolase, found in Pseudomonas fluorescens (strain SBW25).